Here is a 218-residue protein sequence, read N- to C-terminus: ATP phosphoribosyltransferase (218 aa).

The protein belongs to the ATP phosphoribosyltransferase family. Short subfamily. As to quaternary structure, heteromultimer composed of HisG and HisZ subunits.

The protein resides in the cytoplasm. The catalysed reaction is 1-(5-phospho-beta-D-ribosyl)-ATP + diphosphate = 5-phospho-alpha-D-ribose 1-diphosphate + ATP. It functions in the pathway amino-acid biosynthesis; L-histidine biosynthesis; L-histidine from 5-phospho-alpha-D-ribose 1-diphosphate: step 1/9. Its function is as follows. Catalyzes the condensation of ATP and 5-phosphoribose 1-diphosphate to form N'-(5'-phosphoribosyl)-ATP (PR-ATP). Has a crucial role in the pathway because the rate of histidine biosynthesis seems to be controlled primarily by regulation of HisG enzymatic activity. In Lactiplantibacillus plantarum (strain ATCC BAA-793 / NCIMB 8826 / WCFS1) (Lactobacillus plantarum), this protein is ATP phosphoribosyltransferase.